Here is a 419-residue protein sequence, read N- to C-terminus: Hyaluronan synthase (419 aa).

Transmembrane regions (helical) follow at residues 8–28 (LIVL…MYLF), 33–53 (VGIY…LSFL), 318–338 (IVAL…VAIG), 345–365 (AIQL…IVAL), and 376–396 (PASF…LQPL).

The protein belongs to the NodC/HAS family. It depends on Mg(2+) as a cofactor.

The protein resides in the cell membrane. The enzyme catalyses [hyaluronan](n) + UDP-N-acetyl-alpha-D-glucosamine = N-acetyl-beta-D-glucosaminyl-(1-&gt;4)-[hyaluronan](n) + UDP + H(+). It catalyses the reaction N-acetyl-beta-D-glucosaminyl-(1-&gt;4)-[hyaluronan](n) + UDP-alpha-D-glucuronate = [hyaluronan](n+1) + UDP + H(+). Its pathway is glycan biosynthesis; hyaluronan biosynthesis. Its function is as follows. Glycosaminoglycan synthesis. The hyaluronic acid capsule is involved in the pathogenicity of group A Streptococci; it may be the major virulence determinant. The polypeptide is Hyaluronan synthase (hasA) (Streptococcus pyogenes serotype M18 (strain MGAS8232)).